Reading from the N-terminus, the 659-residue chain is Nitrate import ATP-binding protein NrtC (659 aa).

Residues 5–239 (LAVDHVHQVF…RPRQRLEMME (235 aa)) enclose the ABC transporter domain. 42 to 49 (GHSGCGKS) contributes to the ATP binding site. Positions 255-278 (QQQRRAKRRAKAAAPAPAVAASQQ) are linker. The nrtA-like stretch occupies residues 279-659 (KTVRLGFLPG…VAPIPLATSA (381 aa)).

This sequence belongs to the ABC transporter superfamily. Nitrate/nitrite/cyanate uptake transporter (NitT) (TC 3.A.1.16) family. As to quaternary structure, the complex is composed of two ATP-binding proteins (NrtC and NrtD), two transmembrane proteins (NrtB) and a solute-binding protein (NrtA).

It is found in the cell inner membrane. The enzyme catalyses nitrate(out) + ATP + H2O = nitrate(in) + ADP + phosphate + H(+). Its activity is regulated as follows. Transport is inhibited by ammonium. The C-terminal domain of NrtC is involved in the ammonium-promoted inhibition of the nitrate/nitrite transporter. Part of the ABC transporter complex NrtABCD involved in nitrate uptake. The complex is probably also involved in nitrite transport. Probably responsible for energy coupling to the transport system. The chain is Nitrate import ATP-binding protein NrtC from Synechococcus elongatus (strain ATCC 33912 / PCC 7942 / FACHB-805) (Anacystis nidulans R2).